We begin with the raw amino-acid sequence, 430 residues long: Adenylosuccinate synthetase (430 aa).

GTP-binding positions include 12–18 and 40–42; these read GDEGKGK and GHT. D13 functions as the Proton acceptor in the catalytic mechanism. 2 residues coordinate Mg(2+): D13 and G40. IMP-binding positions include 13–16, 38–41, T128, R142, Q223, T238, and R302; these read DEGK and NAGH. H41 (proton donor) is an active-site residue. 298–304 is a binding site for substrate; that stretch reads TTTGRPR. Residues R304, 330–332, and 412–414 each bind GTP; these read SID and SVG.

This sequence belongs to the adenylosuccinate synthetase family. Homodimer. Mg(2+) serves as cofactor.

It is found in the cytoplasm. The catalysed reaction is IMP + L-aspartate + GTP = N(6)-(1,2-dicarboxyethyl)-AMP + GDP + phosphate + 2 H(+). It functions in the pathway purine metabolism; AMP biosynthesis via de novo pathway; AMP from IMP: step 1/2. Plays an important role in the de novo pathway of purine nucleotide biosynthesis. Catalyzes the first committed step in the biosynthesis of AMP from IMP. The sequence is that of Adenylosuccinate synthetase from Streptococcus agalactiae serotype III (strain NEM316).